The chain runs to 723 residues: 1,3-alpha-isomaltosidase (723 aa).

The active-site Nucleophile is aspartate 451. Glutamate 454 is an active-site residue. The active-site Proton donor is aspartate 516. Histidine 581 contacts substrate.

Belongs to the glycosyl hydrolase 31 family.

The protein localises to the cytoplasm. It catalyses the reaction cyclobis-(1-&gt;3)-alpha-D-isomaltosyl + 2 H2O = 2 isomaltose. In terms of biological role, involved in the intracellular degradation of the cyclic tetrasaccharide cyclobis-(1-6)-alpha-nigerosyl (CNN) formed extracellularly from starch. Catalyzes the hydrolysis of the alpha-1,3-glucosidic linkage of cyclobis-(1-6)-alpha-nigerosyl (CNN) to yield isomaltose via a possible linear tetrasaccharide. It has a strong preference for the alpha-(1-3)-isomaltosyl moiety. The protein is 1,3-alpha-isomaltosidase of Kribbella flavida (strain DSM 17836 / JCM 10339 / NBRC 14399).